The chain runs to 189 residues: Putative manganese efflux pump MntP (189 aa).

Transmembrane regions (helical) follow at residues 6–26 (IFGI…AAGV), 39–59 (LAWH…YAGL), 71–91 (WIAF…SFDA), 106–126 (LVLL…SLSV), 131–151 (VWMP…GGLM), and 169–189 (VGAG…GVFY).

It belongs to the MntP (TC 9.B.29) family.

The protein localises to the cell inner membrane. Its function is as follows. Probably functions as a manganese efflux pump. The sequence is that of Putative manganese efflux pump MntP from Desulfosudis oleivorans (strain DSM 6200 / JCM 39069 / Hxd3) (Desulfococcus oleovorans).